The following is a 2637-amino-acid chain: Nonribisomal peptide synthetase valB (2637 aa).

The interval 1 to 376 (MADGADYTQR…KALIRSPPST (376 aa)) is condensation 1. The interval 413-803 (SQASRRPDAA…VGRRDNQIKL (391 aa)) is adenylation 1. In terms of domain architecture, Carrier 1 spans 946 to 1022 (PPANPPERAL…EAASEIKEPT (77 aa)). O-(pantetheine 4'-phosphoryl)serine is present on S983. A disordered region spans residues 1016 to 1045 (SEIKEPTDASAPSPSPISRDLPLQKSNHDR). Residues 1063-1506 (VEAIYPCTAL…LSRADMSLLQ (444 aa)) form a condensation 2 region. Residues 1524 to 1933 (AREVAHQRPL…EGRKDTRVKL (410 aa)) form an adenylation 2 region. A Carrier 2 domain is found at 2078–2154 (KEVTDDQAFM…YMVSKTSVSN (77 aa)). S2115 is modified (O-(pantetheine 4'-phosphoryl)serine). The segment at 2193-2582 (ESVAPATDAQ…LWMGAYLDAA (390 aa)) is condensation 3.

This sequence belongs to the NRP synthetase family.

It participates in secondary metabolite biosynthesis. Functionally, nonribisomal peptide synthetase; part of the gene cluster that mediates the biosynthesis of valactamides. The first step of the pathway is performed by the highly reducing polyketide synthase valA that produces the polyketide part of the final products. An acetyl starter unit is incorporated by the ketosynthase domain of valA, and subsequently 6 malonyl-CoA-derived ketide units are incorporated and fully reduced to their respective alkane forms by the action of the ketoreductase, dehydratase, and enoylreductase domains (except for the penultimate unit, which is reduced only to the alkene). The final five ketide units are each proposed to be alpha-methylated by the methyltransferase domain before ketone reduction by the ketoreductase domain. The C1 domain of the nonribisomal peptide synthetase valB then catalyzes amide bond formation between the heptaketide chain and L-valine (L-Val) attached to the T1 domain. The C2 domain incorporating L-isoleucine (L-Ile) then carries out chain elongation, which is followed by macrolactonization by the Ct domain to release the final product. The chain is Nonribisomal peptide synthetase valB from Aspergillus terreus.